The sequence spans 377 residues: uncharacterized protein (377 aa).

The N-terminal stretch at 1 to 23 (MLKFRNFFKLTLLTLASAFFLSG) is a signal peptide. The N-palmitoyl cysteine moiety is linked to residue Cys-24. Cys-24 is lipidated: S-diacylglycerol cysteine.

The protein localises to the cell membrane. This is an uncharacterized protein from Mycoplasma genitalium (strain ATCC 33530 / DSM 19775 / NCTC 10195 / G37) (Mycoplasmoides genitalium).